We begin with the raw amino-acid sequence, 938 residues long: Isoleucine--tRNA ligase (938 aa).

The 'HIGH' region signature appears at 58 to 68 (PYANGNIHIGH). Glu561 serves as a coordination point for L-isoleucyl-5'-AMP. Residues 602–606 (KMSKS) carry the 'KMSKS' region motif. Residue Lys605 coordinates ATP. Zn(2+) contacts are provided by Cys901, Cys904, Cys921, and Cys924.

It belongs to the class-I aminoacyl-tRNA synthetase family. IleS type 1 subfamily. As to quaternary structure, monomer. Zn(2+) is required as a cofactor.

It is found in the cytoplasm. It catalyses the reaction tRNA(Ile) + L-isoleucine + ATP = L-isoleucyl-tRNA(Ile) + AMP + diphosphate. In terms of biological role, catalyzes the attachment of isoleucine to tRNA(Ile). As IleRS can inadvertently accommodate and process structurally similar amino acids such as valine, to avoid such errors it has two additional distinct tRNA(Ile)-dependent editing activities. One activity is designated as 'pretransfer' editing and involves the hydrolysis of activated Val-AMP. The other activity is designated 'posttransfer' editing and involves deacylation of mischarged Val-tRNA(Ile). The sequence is that of Isoleucine--tRNA ligase from Yersinia pseudotuberculosis serotype O:1b (strain IP 31758).